Reading from the N-terminus, the 314-residue chain is Solute carrier family 25 member 33 (314 aa).

Solcar repeat units follow at residues 4-111 (KDTL…SKET), 119-206 (NSGV…LKKY), and 224-308 (SDFL…IVHL). 6 helical membrane-spanning segments follow: residues 7–27 (LLHLFAGGCGGTVGAIMTCPL), 44–58 (VFQVQLGTLNGAGVI), 114–134 (GIFVPNSGVVHMSSAGFAAFI), 183–203 (LTASYAGISETMICFLIYETL), 226–246 (FLGLMFAAAFAKGCASCIAYP), and 291–311 (QIPNTAIVLSTYELIVHLLAE).

It belongs to the mitochondrial carrier (TC 2.A.29) family.

It is found in the mitochondrion inner membrane. In terms of biological role, mitochondrial transporter that imports/exports pyrimidine nucleotides into and from mitochondria which participates in dendritic cell endocytosis. The polypeptide is Solute carrier family 25 member 33 (slc25a33) (Danio rerio (Zebrafish)).